Here is a 287-residue protein sequence, read N- to C-terminus: Iron-sulfur cluster carrier protein (287 aa).

47-54 (GKGGVGKS) serves as a coordination point for ATP.

Belongs to the Mrp/NBP35 ATP-binding proteins family. As to quaternary structure, homodimer.

Its function is as follows. Binds and transfers iron-sulfur (Fe-S) clusters to target apoproteins. Can hydrolyze ATP. The protein is Iron-sulfur cluster carrier protein of Pseudomonas fragi.